A 445-amino-acid chain; its full sequence is Na(+)-translocating NADH-quinone reductase subunit A (445 aa).

This sequence belongs to the NqrA family. As to quaternary structure, composed of six subunits; NqrA, NqrB, NqrC, NqrD, NqrE and NqrF.

The enzyme catalyses a ubiquinone + n Na(+)(in) + NADH + H(+) = a ubiquinol + n Na(+)(out) + NAD(+). Its function is as follows. NQR complex catalyzes the reduction of ubiquinone-1 to ubiquinol by two successive reactions, coupled with the transport of Na(+) ions from the cytoplasm to the periplasm. NqrA to NqrE are probably involved in the second step, the conversion of ubisemiquinone to ubiquinol. In Pseudomonas aeruginosa (strain ATCC 15692 / DSM 22644 / CIP 104116 / JCM 14847 / LMG 12228 / 1C / PRS 101 / PAO1), this protein is Na(+)-translocating NADH-quinone reductase subunit A.